The chain runs to 30 residues: Cytochrome b6-f complex subunit 8 (30 aa).

Residues 4–24 (IISLGWGSLLAIFSFSIALVV) traverse the membrane as a helical segment.

It belongs to the PetN family. The 4 large subunits of the cytochrome b6-f complex are cytochrome b6, subunit IV (17 kDa polypeptide, PetD), cytochrome f and the Rieske protein, while the 4 small subunits are PetG, PetL, PetM and PetN. The complex functions as a dimer.

Its subcellular location is the plastid. The protein resides in the chloroplast thylakoid membrane. Functionally, component of the cytochrome b6-f complex, which mediates electron transfer between photosystem II (PSII) and photosystem I (PSI), cyclic electron flow around PSI, and state transitions. In Gracilaria tenuistipitata var. liui (Red alga), this protein is Cytochrome b6-f complex subunit 8.